The sequence spans 333 residues: Homoserine O-succinyltransferase (333 aa).

The active-site Acyl-thioester intermediate is the Cys147. Residues Lys168 and Ser196 each coordinate substrate. The active-site Proton acceptor is His239. Glu241 is a catalytic residue. Substrate is bound at residue Arg253.

It belongs to the MetA family.

Its subcellular location is the cytoplasm. It carries out the reaction L-homoserine + succinyl-CoA = O-succinyl-L-homoserine + CoA. The protein operates within amino-acid biosynthesis; L-methionine biosynthesis via de novo pathway; O-succinyl-L-homoserine from L-homoserine: step 1/1. In terms of biological role, transfers a succinyl group from succinyl-CoA to L-homoserine, forming succinyl-L-homoserine. The chain is Homoserine O-succinyltransferase from Rhodopseudomonas palustris.